The primary structure comprises 339 residues: Heat-inducible transcription repressor HrcA (339 aa).

This sequence belongs to the HrcA family.

In terms of biological role, negative regulator of class I heat shock genes (grpE-dnaK-dnaJ and groELS operons). Prevents heat-shock induction of these operons. In Paraburkholderia phytofirmans (strain DSM 17436 / LMG 22146 / PsJN) (Burkholderia phytofirmans), this protein is Heat-inducible transcription repressor HrcA.